A 511-amino-acid polypeptide reads, in one-letter code: Maturase K (511 aa).

The protein belongs to the intron maturase 2 family. MatK subfamily.

The protein localises to the plastid. It is found in the chloroplast. Functionally, usually encoded in the trnK tRNA gene intron. Probably assists in splicing its own and other chloroplast group II introns. The protein is Maturase K of Maihuenia poeppigii (Hardy cactus).